A 567-amino-acid polypeptide reads, in one-letter code: Monodechloroaminopyrrolnitrin halogenase PrnC (567 aa).

It participates in antibiotic biosynthesis. Functionally, involved in the biosynthesis of the antifungal antibiotic pyrrolnitrin. Catalyzes the chlorination of monodechloroaminopyrrolnitrin (MDA) at the 3 position to form aminopyrrolnitrin (APRN). This is Monodechloroaminopyrrolnitrin halogenase PrnC (prnC) from Pseudomonas fluorescens.